Reading from the N-terminus, the 502-residue chain is ATP synthase subunit alpha (502 aa).

Position 169 to 176 (Gly169 to Thr176) interacts with ATP.

The protein belongs to the ATPase alpha/beta chains family. As to quaternary structure, F-type ATPases have 2 components, CF(1) - the catalytic core - and CF(0) - the membrane proton channel. CF(1) has five subunits: alpha(3), beta(3), gamma(1), delta(1), epsilon(1). CF(0) has three main subunits: a(1), b(2) and c(9-12). The alpha and beta chains form an alternating ring which encloses part of the gamma chain. CF(1) is attached to CF(0) by a central stalk formed by the gamma and epsilon chains, while a peripheral stalk is formed by the delta and b chains.

It localises to the cell inner membrane. It carries out the reaction ATP + H2O + 4 H(+)(in) = ADP + phosphate + 5 H(+)(out). In terms of biological role, produces ATP from ADP in the presence of a proton gradient across the membrane. The alpha chain is a regulatory subunit. The sequence is that of ATP synthase subunit alpha from Geotalea uraniireducens (strain Rf4) (Geobacter uraniireducens).